The chain runs to 446 residues: Zinc finger protein 19 (446 aa).

The region spanning 2 to 73 is the KRAB domain; that stretch reads VTFEDVAVHF…EAQDDPPAET (72 aa). 9 consecutive C2H2-type zinc fingers follow at residues 149–171, 177–199, 205–227, 233–255, 261–283, 289–311, 317–339, 345–367, and 373–395; these read FICEECGKSFSYFSYYARHQRIH, FECSECGKAFNGNSSLIRHQRIH, YQCEECGRAFNDNANLIRHQRIH, YYCTECGNSFTSSSEFVIHQRIH, YECNECGKAFVGNSPLLRHQKIH, YECNECGKSFGRTSHLSQHQRIH, YSCKVCGQAFNFHTKLTRHQRIH, FDCVDCGKAFSAQEQLKRHLRIH, and YVCDECGKAFTSKRNLHQHQRIH. The C2H2-type 10; degenerate zinc finger occupies 401-423; it reads YEYSKYEKAFGTSSQLGHLEHVH.

Belongs to the krueppel C2H2-type zinc-finger protein family.

The protein resides in the nucleus. Functionally, may be involved in transcriptional regulation. This Pongo abelii (Sumatran orangutan) protein is Zinc finger protein 19 (ZNF19).